The sequence spans 591 residues: 4-coumarate--CoA ligase-like 3 (591 aa).

ATP contacts are provided by Ser-228, Ser-229, Gly-230, Thr-231, Ser-232, and Lys-236. Tyr-280 lines the (E)-4-coumaroyl-AMP pocket. Arg-301 contacts CoA. Residues 303 to 375 are SBD1; it reads DAGDAVAAIG…QAFPHVDFIQ (73 aa). Residues Ala-353, Gln-375, Gly-376, and Thr-380 each coordinate (E)-4-coumaroyl-AMP. ATP contacts are provided by Gln-375, Gly-376, Thr-380, Asp-459, and Arg-474. Residues 376 to 440 form an SBD2 region; the sequence is GYGMTESTAV…LHGPGIMKGY (65 aa). Lys-476 and Lys-480 together coordinate (E)-4-coumaroyl-AMP. The CoA site is built by Lys-482 and Gly-483. ATP is bound at residue Lys-565.

It belongs to the ATP-dependent AMP-binding enzyme family. Requires Mg(2+) as cofactor.

It catalyses the reaction (E)-4-coumarate + ATP + CoA = (E)-4-coumaroyl-CoA + AMP + diphosphate. The enzyme catalyses (E)-4-coumarate + ATP + H(+) = (E)-4-coumaroyl-AMP + diphosphate. The catalysed reaction is (E)-4-coumaroyl-AMP + CoA = (E)-4-coumaroyl-CoA + AMP + H(+). Its function is as follows. Carboxylate--CoA ligase that may use 4-coumarate as substrate. Follows a two-step reaction mechanism, wherein the carboxylate substrate first undergoes adenylation by ATP, followed by a thioesterification in the presence of CoA to yield the final CoA thioester. This Oryza sativa subsp. japonica (Rice) protein is 4-coumarate--CoA ligase-like 3 (4CLL3).